A 308-amino-acid polypeptide reads, in one-letter code: Ribonuclease H2 subunit B (308 aa).

The residue at position 2 (Ala2) is an N-acetylalanine. N6-acetyllysine is present on Lys292. Phosphoserine is present on Ser293.

This sequence belongs to the RNase H2 subunit B family. In terms of assembly, the RNase H2 complex is a heterotrimer composed of the catalytic subunit RNASEH2A and the non-catalytic subunits RNASEH2B and RNASEH2C.

It localises to the nucleus. Non catalytic subunit of RNase H2, an endonuclease that specifically degrades the RNA of RNA:DNA hybrids. Participates in DNA replication, possibly by mediating the removal of lagging-strand Okazaki fragment RNA primers during DNA replication. Mediates the excision of single ribonucleotides from DNA:RNA duplexes. The sequence is that of Ribonuclease H2 subunit B (Rnaseh2b) from Mus musculus (Mouse).